A 146-amino-acid polypeptide reads, in one-letter code: Large ribosomal subunit protein uL15 (146 aa).

Residues 1-58 are disordered; that stretch reads MNLSELRPAPGARKKPTRKGQGIGSGLGKTAGKGHKGQNARSGGGVRPGFEGGQMPLQ. Gly residues-rich tracts occupy residues 21 to 31 and 42 to 52; these read QGIGSGLGKTA and SGGGVRPGFEG.

This sequence belongs to the universal ribosomal protein uL15 family. Part of the 50S ribosomal subunit.

Binds to the 23S rRNA. The chain is Large ribosomal subunit protein uL15 from Desulforamulus reducens (strain ATCC BAA-1160 / DSM 100696 / MI-1) (Desulfotomaculum reducens).